Here is a 546-residue protein sequence, read N- to C-terminus: Chaperonin GroEL 2 (546 aa).

ATP-binding positions include 30–33, Lys51, 87–91, Gly415, and Asp496; these read TLGP and DGTTT.

It belongs to the chaperonin (HSP60) family. Forms a cylinder of 14 subunits composed of two heptameric rings stacked back-to-back. Interacts with the co-chaperonin GroES.

Its subcellular location is the cytoplasm. The enzyme catalyses ATP + H2O + a folded polypeptide = ADP + phosphate + an unfolded polypeptide.. Functionally, together with its co-chaperonin GroES, plays an essential role in assisting protein folding. The GroEL-GroES system forms a nano-cage that allows encapsulation of the non-native substrate proteins and provides a physical environment optimized to promote and accelerate protein folding. The polypeptide is Chaperonin GroEL 2 (Bradyrhizobium sp. (strain ORS 278)).